A 197-amino-acid chain; its full sequence is MSVSNEYKLVVMGGGGVGKSALTIQFIQNHFIEEYDPTIEDSYRRQCQVDEDTCLLDILDTAGQDDYSAMRDQYMRTGQGFLCVYDVTSRTSFEEINVVREQIIRVKDNDKVPIVLVGNKCDLENLREVTEGEGSELAKSFSVPFLETSAKKRLNVDECFFEVVREIKKSLKEPGRSKKDKKGGILKKFKGGDCLIL.

13–20 (GGGGVGKS) serves as a coordination point for GTP. The Effector region motif lies at 35–43 (YDPTIEDSY). GTP-binding positions include 60-64 (DTAGQ) and 119-122 (NKCD). Residue Cys-194 is modified to Cysteine methyl ester. Cys-194 is lipidated: S-geranylgeranyl cysteine. Positions 195-197 (LIL) are cleaved as a propeptide — removed in mature form.

It belongs to the small GTPase superfamily. Ras family.

It localises to the cell membrane. The enzyme catalyses GTP + H2O = GDP + phosphate + H(+). Alternates between an inactive form bound to GDP and an active form bound to GTP. Activated by a guanine nucleotide-exchange factor (GEF) and inactivated by a GTPase-activating protein (GAP). In terms of biological role, ras proteins bind GDP/GTP and possess intrinsic GTPase activity. The protein is Ras-like protein rasB (rasB) of Dictyostelium discoideum (Social amoeba).